The following is a 312-amino-acid chain: Ribosomal protein L11 methyltransferase (312 aa).

Thr162, Gly183, Asp205, and Asn248 together coordinate S-adenosyl-L-methionine.

It belongs to the methyltransferase superfamily. PrmA family.

It is found in the cytoplasm. The enzyme catalyses L-lysyl-[protein] + 3 S-adenosyl-L-methionine = N(6),N(6),N(6)-trimethyl-L-lysyl-[protein] + 3 S-adenosyl-L-homocysteine + 3 H(+). Its function is as follows. Methylates ribosomal protein L11. This Bacillus cereus (strain G9842) protein is Ribosomal protein L11 methyltransferase.